The following is a 409-amino-acid chain: Nucleoprotein (409 aa).

Disordered stretches follow at residues 1-32 (MASG…SSGN), 44-63 (LNSP…ENLK), 120-145 (GADT…LRFS), and 164-193 (RSGR…SGAE). A compositionally biased stretch (low complexity) spans 15 to 31 (PVIKLGGPKPPKVGSSG). Residues 29–160 (SSGNASWFQA…GNFRWDFIPI (132 aa)) are RNA-binding. In terms of domain architecture, CoV N NTD spans 31–156 (GNASWFQALK…GGPDGNFRWD (126 aa)). Over residues 164 to 179 (RSGRSTAASSAASSRA) the composition is skewed to low complexity. Basic and acidic residues predominate over residues 180-192 (PSRDGSRGRRSGA). A Phosphoserine; by host modification is found at S190. In terms of domain architecture, CoV N CTD spans 215 to 331 (TKAKADEMAH…QCVDGVGTRP (117 aa)). Residues 226-333 (RYCKRTIPPG…VDGVGTRPKD (108 aa)) are dimerization. Residues C320 and C323 are joined by a disulfide bond. The disordered stretch occupies residues 326-409 (GVGTRPKDDE…GDSALGENEL (84 aa)). Polar residues predominate over residues 341–355 (RPNSRPATRTSSPAP). The span at 358 to 367 (QRQKKEKKSK) shows a compositional bias: basic residues. A compositionally biased stretch (basic and acidic residues) spans 368–384 (KQDDEVDKALTSDEERN). T378 bears the Phosphothreonine; by host mark. S379 carries the post-translational modification Phosphoserine; by host.

This sequence belongs to the gammacoronavirus nucleocapsid protein family. In terms of assembly, homooligomer. Both monomeric and oligomeric forms interact with RNA. Interacts with protein M. Interacts with NSP3; this interaction serves to tether the genome to the newly translated replicase-transcriptase complex at a very early stage of infection. ADP-ribosylated. The ADP-ribosylation is retained in the virion during infection. Post-translationally, phosphorylated on serine and threonine residues.

It is found in the virion. The protein localises to the host endoplasmic reticulum-Golgi intermediate compartment. Its subcellular location is the host Golgi apparatus. Functionally, packages the positive strand viral genome RNA into a helical ribonucleocapsid (RNP) and plays a fundamental role during virion assembly through its interactions with the viral genome and membrane protein M. Plays an important role in enhancing the efficiency of subgenomic viral RNA transcription as well as viral replication. This Avian infectious bronchitis virus (strain H120) (IBV) protein is Nucleoprotein.